A 340-amino-acid chain; its full sequence is DNA-directed RNA polymerase subunit alpha (340 aa).

The segment at 1 to 233 (MIQDEIKVST…DLFIPLINSE (233 aa)) is alpha N-terminal domain (alpha-NTD). An alpha C-terminal domain (alpha-CTD) region spans residues 265 to 340 (TKDVAFKHIF…IQLPKNKNYL (76 aa)).

The protein belongs to the RNA polymerase alpha chain family. In terms of assembly, in plastids the minimal PEP RNA polymerase catalytic core is composed of four subunits: alpha, beta, beta', and beta''. When a (nuclear-encoded) sigma factor is associated with the core the holoenzyme is formed, which can initiate transcription.

Its subcellular location is the plastid. The protein resides in the chloroplast. The catalysed reaction is RNA(n) + a ribonucleoside 5'-triphosphate = RNA(n+1) + diphosphate. Functionally, DNA-dependent RNA polymerase catalyzes the transcription of DNA into RNA using the four ribonucleoside triphosphates as substrates. The sequence is that of DNA-directed RNA polymerase subunit alpha from Marchantia polymorpha (Common liverwort).